Reading from the N-terminus, the 397-residue chain is Probable peptidoglycan glycosyltransferase FtsW (397 aa).

Topologically, residues 1-18 are cytoplasmic; the sequence is MSALTLTASKNTQTMTLD. A helical membrane pass occupies residues 19 to 39; that stretch reads LPLLGSALALAAIGLIMVTSA. Over 40–58 the chain is Periplasmic; that stretch reads SVDFADDANGQALYYMWRH. The helical transmembrane segment at 59–79 threads the bilayer; it reads LTYLLAGVAVGFVILRLPLEW. The Cytoplasmic segment spans residues 80-83; it reads WHKQ. Residues 84–104 traverse the membrane as a helical segment; it reads SWLLLVVALGFLVAVLIPGIG. At 105–112 the chain is on the periplasmic side; that stretch reads RTVNGSTR. A helical transmembrane segment spans residues 113-133; sequence WISLGVINIQASEIAKVCLAI. Residues 134 to 148 are Cytoplasmic-facing; that stretch reads YTASYLVRRLDEVRG. The chain crosses the membrane as a helical span at residues 149 to 169; it reads SWWGFAKPLLVLMLVALLLLM. At 170–172 the chain is on the periplasmic side; sequence EPD. The chain crosses the membrane as a helical span at residues 173-193; it reads FGALVVTMCAVVGMIFLSGVA. Residues 194–196 lie on the Cytoplasmic side of the membrane; it reads LSR. Residues 197–217 traverse the membrane as a helical segment; that stretch reads FAALLMFCVGSVALLAVSQPY. The Periplasmic segment spans residues 218-272; it reads RLKRLTAYTDPWADQFDSGYQLTQALIAFGRGEWSGVGLGNSVQKLFYLPEAHTD. The helical transmembrane segment at 273–293 threads the bilayer; the sequence is FVFAIIAEELGLLGSLLIIVL. Over 294–316 the chain is Cytoplasmic; the sequence is FGVLLWRGMYVSRVAERAGQLFN. The chain crosses the membrane as a helical span at residues 317 to 337; that stretch reads AYAGYGVTLLLGGQALINLGV. At 338 to 348 the chain is on the periplasmic side; that stretch reads NTGLLPTKGLT. The chain crosses the membrane as a helical span at residues 349-369; the sequence is LPLISYGGSSLIISCLCVAIL. The Cytoplasmic segment spans residues 370-397; the sequence is LRIGSEAVSGEQTEDESPKVKNRGGAQR.

It belongs to the SEDS family. FtsW subfamily.

It localises to the cell inner membrane. The enzyme catalyses [GlcNAc-(1-&gt;4)-Mur2Ac(oyl-L-Ala-gamma-D-Glu-L-Lys-D-Ala-D-Ala)](n)-di-trans,octa-cis-undecaprenyl diphosphate + beta-D-GlcNAc-(1-&gt;4)-Mur2Ac(oyl-L-Ala-gamma-D-Glu-L-Lys-D-Ala-D-Ala)-di-trans,octa-cis-undecaprenyl diphosphate = [GlcNAc-(1-&gt;4)-Mur2Ac(oyl-L-Ala-gamma-D-Glu-L-Lys-D-Ala-D-Ala)](n+1)-di-trans,octa-cis-undecaprenyl diphosphate + di-trans,octa-cis-undecaprenyl diphosphate + H(+). Its pathway is cell wall biogenesis; peptidoglycan biosynthesis. In terms of biological role, peptidoglycan polymerase that is essential for cell division. The protein is Probable peptidoglycan glycosyltransferase FtsW of Hahella chejuensis (strain KCTC 2396).